We begin with the raw amino-acid sequence, 475 residues long: 3-isopropylmalate dehydratase large subunit (475 aa).

[4Fe-4S] cluster contacts are provided by cysteine 347, cysteine 407, and cysteine 410. The segment at 418 to 442 is disordered; it reads LAPGERSASTSNRNFEGRQGKGGRT.

The protein belongs to the aconitase/IPM isomerase family. LeuC type 1 subfamily. As to quaternary structure, heterodimer of LeuC and LeuD. [4Fe-4S] cluster is required as a cofactor.

It carries out the reaction (2R,3S)-3-isopropylmalate = (2S)-2-isopropylmalate. It functions in the pathway amino-acid biosynthesis; L-leucine biosynthesis; L-leucine from 3-methyl-2-oxobutanoate: step 2/4. In terms of biological role, catalyzes the isomerization between 2-isopropylmalate and 3-isopropylmalate, via the formation of 2-isopropylmaleate. The chain is 3-isopropylmalate dehydratase large subunit from Streptomyces griseus subsp. griseus (strain JCM 4626 / CBS 651.72 / NBRC 13350 / KCC S-0626 / ISP 5235).